We begin with the raw amino-acid sequence, 715 residues long: 1,4-alpha-glucan branching enzyme GlgB (715 aa).

Catalysis depends on Asp399, which acts as the Nucleophile. Catalysis depends on Glu452, which acts as the Proton donor.

Belongs to the glycosyl hydrolase 13 family. GlgB subfamily. In terms of assembly, monomer.

It catalyses the reaction Transfers a segment of a (1-&gt;4)-alpha-D-glucan chain to a primary hydroxy group in a similar glucan chain.. It functions in the pathway glycan biosynthesis; glycogen biosynthesis. Catalyzes the formation of the alpha-1,6-glucosidic linkages in glycogen by scission of a 1,4-alpha-linked oligosaccharide from growing alpha-1,4-glucan chains and the subsequent attachment of the oligosaccharide to the alpha-1,6 position. The protein is 1,4-alpha-glucan branching enzyme GlgB of Rhodopseudomonas palustris (strain BisA53).